The chain runs to 353 residues: Guanine nucleotide-binding protein subunit alpha (353 aa).

Positions 1 to 26 are disordered; sequence MGCGMSVEEKEGKARNEEIENQLKRD. The N-myristoyl glycine moiety is linked to residue Gly2. Cys3 carries S-palmitoyl cysteine lipidation. Positions 7–26 are enriched in basic and acidic residues; that stretch reads VEEKEGKARNEEIENQLKRD. Residues 32–353 form the G-alpha domain; sequence NEIKMLLLGA…QENLRLCGLI (322 aa). The interval 35-48 is G1 motif; sequence KMLLLGAGESGKST. GTP contacts are provided by Glu43, Ser44, Gly45, Lys46, Ser47, Thr48, Asp150, Leu175, Thr181, Gly203, Asn269, Lys270, Asp272, and Ala325. Ser47 lines the Mg(2+) pocket. A G2 motif region spans residues 173–181; it reads DVLRSRVKT. Residue Thr181 participates in Mg(2+) binding. The G3 motif stretch occupies residues 196-205; that stretch reads YRMFDVGGQR. A G4 motif region spans residues 265-272; it reads ILFLNKID. A G5 motif region spans residues 323–328; the sequence is TCATDT.

It belongs to the G-alpha family. G(q) subfamily. G proteins are composed of 3 units; alpha, beta and gamma. The alpha chain contains the guanine nucleotide binding site. The cofactor is Mg(2+).

Guanine nucleotide-binding proteins (G proteins) are involved as modulators or transducers in various transmembrane signaling systems. The polypeptide is Guanine nucleotide-binding protein subunit alpha (SSG-1) (Sporothrix schenckii (strain ATCC 58251 / de Perez 2211183) (Rose-picker's disease fungus)).